A 271-amino-acid polypeptide reads, in one-letter code: Urease accessory protein UreD (271 aa).

The protein belongs to the UreD family. UreD, UreF and UreG form a complex that acts as a GTP-hydrolysis-dependent molecular chaperone, activating the urease apoprotein by helping to assemble the nickel containing metallocenter of UreC. The UreE protein probably delivers the nickel.

It localises to the cytoplasm. Required for maturation of urease via the functional incorporation of the urease nickel metallocenter. In Haemophilus influenzae (strain PittGG), this protein is Urease accessory protein UreD.